We begin with the raw amino-acid sequence, 392 residues long: MARSDYLFTSESVSEGHPDKVCDRISDTVVDAYLAEMPEARLGVETLATTNRIVIAGEVRGPDSVTFQRLEELTRAAIRDIGYEQDGFHWKHADVAIYLHAQSADIAQGVDASGNKDEGAGDQGIMFGYATDETPALMPAPIYYAHKILKDLADARKARIGDAAKLGPDAKSQVTVRYEGGRPVEATQIVLSTQHLDPSLDSAGVRAIVEPYIRAALPKSWVNDRTVWHVNPTGKFVIGGPDGDCGLTGRKIIVDTYGGAAPHGGGAFSGKDPTKVDRSAAYAARYLAKNVVAAGLSRRATIQLAYAIGVSRPLSIYVDLHGTGEVDEGRLEKVLGEILDLSPRGIRTHLGLNKPIYARTSAYGHFGREPDADGGFSWEKTDLVAKLKSALA.

An ATP-binding site is contributed by His-17. Residue Asp-19 participates in Mg(2+) binding. Residue Glu-45 participates in K(+) binding. Residues Glu-58 and Gln-102 each coordinate L-methionine. The flexible loop stretch occupies residues 102 to 112; the sequence is QSADIAQGVDA. Residues 169–171, 235–236, Asp-244, 250–251, Ala-267, and Lys-271 each bind ATP; these read DAK, KF, and RK. An L-methionine-binding site is contributed by Asp-244. Residue Lys-275 participates in L-methionine binding.

The protein belongs to the AdoMet synthase family. In terms of assembly, homotetramer; dimer of dimers. It depends on Mg(2+) as a cofactor. Requires K(+) as cofactor.

Its subcellular location is the cytoplasm. It catalyses the reaction L-methionine + ATP + H2O = S-adenosyl-L-methionine + phosphate + diphosphate. The protein operates within amino-acid biosynthesis; S-adenosyl-L-methionine biosynthesis; S-adenosyl-L-methionine from L-methionine: step 1/1. Functionally, catalyzes the formation of S-adenosylmethionine (AdoMet) from methionine and ATP. The overall synthetic reaction is composed of two sequential steps, AdoMet formation and the subsequent tripolyphosphate hydrolysis which occurs prior to release of AdoMet from the enzyme. This chain is S-adenosylmethionine synthase, found in Methylobacterium nodulans (strain LMG 21967 / CNCM I-2342 / ORS 2060).